The chain runs to 1103 residues: Retinal guanylyl cyclase 2 (1103 aa).

The first 46 residues, 1–46 (MFLAPWPFSHLMLWFVTLGRQRGQHGLASFKLLWCLWLLVLMSLPL), serve as a signal peptide directing secretion. Topologically, residues 47-465 (QVWAPPYKIG…DGRICQGGIN (419 aa)) are extracellular. A disulfide bridge links C104 with C132. The helical transmembrane segment at 466 to 490 (PTFALMVCLALLIALLSINGFAYFI) threads the bilayer. The Cytoplasmic segment spans residues 491–1103 (RHRINKIQLI…FQRRKQKSSW (613 aa)). In terms of domain architecture, Protein kinase spans 532–812 (FQITSEVQSG…DEIFNQFKTF (281 aa)). A Guanylate cyclase domain is found at 884 to 1014 (TLYFSDIVGF…DTVNTASRME (131 aa)).

Belongs to the adenylyl cyclase class-4/guanylyl cyclase family. As to quaternary structure, homodimer. Interacts with RD3; promotes the exit of GUCY2F from the endoplasmic reticulum and its trafficking to the photoreceptor outer segments. In terms of processing, there are 9 conserved cysteine residues in sensory guanylate cyclases, 6 in the extracellular domain, which may be involved in intra- or interchain disulfide bonds. As to expression, expressed specifically in retina.

The protein resides in the membrane. The protein localises to the photoreceptor outer segment membrane. The catalysed reaction is GTP = 3',5'-cyclic GMP + diphosphate. Activated by GUCA1B when free calcium ions concentration is low, and inhibited by GUCA1B when free calcium ions concentration is high. Inhibited by RD3. In terms of biological role, responsible for the synthesis of cyclic GMP (cGMP) in rods and cones of photoreceptors. Plays an essential role in phototransduction, by mediating cGMP replenishment. May also participate in the trafficking of membrane-asociated proteins to the photoreceptor outer segment membrane. In Bos taurus (Bovine), this protein is Retinal guanylyl cyclase 2 (GUCY2F).